We begin with the raw amino-acid sequence, 538 residues long: [Pyruvate dehydrogenase [acetyl-transferring]]-phosphatase 1, mitochondrial (538 aa).

A mitochondrion-targeting transit peptide spans 1 to 71 (MPAPTQLFFP…WWQYTQGRRY (71 aa)). One can recognise a PPM-type phosphatase domain in the interval 109–525 (VLGFDSNQLP…DDITIIVVQF (417 aa)). Residues Asp144 and Gly145 each coordinate Mn(2+). Lys202 carries the N6-acetyllysine modification. Mn(2+)-binding residues include Asp418 and Asp516.

This sequence belongs to the PP2C family. In terms of assembly, heterodimer of a catalytic (PDP1) and a regulatory (PDPR) subunit. Requires Mn(2+) as cofactor. Mg(2+) serves as cofactor.

The protein resides in the mitochondrion. It carries out the reaction O-phospho-L-seryl-[pyruvate dehydrogenase E1 alpha subunit] + H2O = L-seryl-[pyruvate dehydrogenase E1 alpha subunit] + phosphate. Magnesium-dependent and calcium-stimulated. PDP1 activity strongly depends on its Ca(2+)-dependent binding to the lipoyl domain of E2 subunit of component of the pyruvate dehydrogenase complex. Its function is as follows. Mitochondrial enzyme that catalyzes the dephosphorylation and concomitant reactivation of the alpha subunit of the E1 component of the pyruvate dehydrogenase complex (PDC), thereby stimulating the conversion of pyruvate into acetyl-CoA. The polypeptide is [Pyruvate dehydrogenase [acetyl-transferring]]-phosphatase 1, mitochondrial (PDP1) (Bos taurus (Bovine)).